The sequence spans 459 residues: WD repeat-containing protein 41 (459 aa).

WD repeat units lie at residues 40–79 (KAHH…KLLE), 82–128 (GHTQ…QVQR), 131–168 (CFQS…LCKT), 220–258 (DHQD…MQAY), 321–359 (AHDS…QLAA), and 403–441 (GHSS…SGLR).

Component of the C9orf72-SMCR8 complex, at least composed of C9orf72, SMCR8 and WDR41. The complex is formed of two protomers, each individually consisting of one molecule each of C9orf72, SMCR8 and WDR41. The protomers homodimerize via an interaction between C9orf72 (via C-terminus) and SMCR8 (via N-terminus). Within each protomer SMCR8 (via DENN domain) acts as a bridging protein between WDR41 (via C-terminus and N-terminus) and C9orf72 (via C-terminus). The C9orf72-SMCR8 complex associates with the ULK1/ATG1 kinase complex.

Its subcellular location is the cytoplasm. Functionally, non-catalytic component of the C9orf72-SMCR8 complex, a complex that has guanine nucleotide exchange factor (GEF) activity and regulates autophagy. The C9orf72-SMCR8 complex promotes the exchange of GDP to GTP, converting inactive GDP-bound RAB8A and RAB39B into their active GTP-bound form, thereby promoting autophagosome maturation. As part of the C9orf72-SMCR8 complex, stimulates RAB8A and RAB11A GTPase activity in vitro, however WDR42 is shown not be an essential complex component for this function. The C9orf72-SMCR8 complex also acts as a negative regulator of autophagy initiation by interacting with the ULK1/ATG1 kinase complex and inhibiting its protein kinase activity. The protein is WD repeat-containing protein 41 of Homo sapiens (Human).